Consider the following 3014-residue polypeptide: Cadherin EGF LAG seven-pass G-type receptor 1 (3014 aa).

Residues M1–A20 form the signal peptide. The Extracellular segment spans residues P22–K2469. Residues A205–S242 form a disordered region. Residues S211–L222 are compositionally biased toward pro residues. Cadherin domains lie at P246–F353, E354–F459, S460–F565, V566–F687, T688–F789, Q790–F892, L893–F999, E1000–L1101, and I1106–L1224. N-linked (GlcNAc...) asparagine glycosylation is found at N403, N546, N634, and N778. N-linked (GlcNAc...) asparagine glycosylation is found at N1114, N1139, N1213, N1249, N1259, and N1287. Positions D1303 to E1361 constitute an EGF-like 1; calcium-binding domain. 9 disulfides stabilise this stretch: C1307–C1318, C1312–C1349, C1351–C1360, C1367–C1378, C1372–C1387, C1389–C1398, C1407–C1418, C1412–C1428, and C1430–C1440. Residues E1363–E1399 form the EGF-like 2; calcium-binding domain. The region spanning R1403–E1441 is the EGF-like 3; calcium-binding domain. A Laminin G-like 1 domain is found at V1442–C1646. N1576, N1623, and N1640 each carry an N-linked (GlcNAc...) asparagine glycan. 13 disulfide bridges follow: C1620–C1646, C1653–C1664, C1658–C1673, C1675–C1684, C1840–C1870, C1876–C1887, C1881–C1896, C1898–C1907, C1911–C1922, C1916–C1934, C1936–C1945, C1953–C1966, and C1968–C1978. The EGF-like 4; calcium-binding domain occupies R1649–E1685. N1666 carries the post-translational modification (3R)-3-hydroxyasparagine. The Laminin G-like 2 domain maps to P1689–C1870. Positions V1872 to C1907 constitute an EGF-like 5; calcium-binding domain. D1889 carries the (3R)-3-hydroxyaspartate modification. The region spanning V1908 to E1946 is the EGF-like 6; calcium-binding domain. In terms of domain architecture, EGF-like 7; calcium-binding spans N1947–N1979. N-linked (GlcNAc...) asparagine glycosylation is present at N1979. In terms of domain architecture, EGF-like 8; calcium-binding spans T1981 to D2016. 5 cysteine pairs are disulfide-bonded: C1985/C2000, C1987/C2003, C2005/C2015, C2024/C2033, and C2036/C2048. The Laminin EGF-like domain occupies C2003–V2050. N-linked (GlcNAc...) asparagine glycans are attached at residues N2103, N2122, and N2257. A disordered region spans residues P2291 to R2328. The GAIN-B domain occupies P2297 to E2461. The segment covering R2300–G2316 has biased composition (low complexity). Cystine bridges form between C2411–C2443 and C2431–C2445. The segment at C2411–E2461 is GPS. N2415 and N2437 each carry an N-linked (GlcNAc...) asparagine glycan. Residues I2470–L2490 traverse the membrane as a helical segment. The Cytoplasmic segment spans residues S2491–H2501. A helical transmembrane segment spans residues S2502–I2522. N-linked (GlcNAc...) asparagine glycosylation occurs at N2523. The Extracellular segment spans residues N2523 to N2527. The helical transmembrane segment at P2528–W2548 threads the bilayer. Over T2549–R2572 the chain is Cytoplasmic. The helical transmembrane segment at F2573–D2593 threads the bilayer. Topologically, residues P2594–L2611 are extracellular. A helical transmembrane segment spans residues I2612–L2632. The Cytoplasmic portion of the chain corresponds to S2633–R2655. Residues T2656–N2676 form a helical membrane-spanning segment. Residues R2677–H2683 lie on the Extracellular side of the membrane. The chain crosses the membrane as a helical span at residues Y2684 to L2704. The Cytoplasmic segment spans residues N2705–P3014. A phosphoserine mark is found at S2761 and S2764. 2 disordered regions span residues S2777–L2939 and L2954–P3014. Residues S2796–D2806 are compositionally biased toward basic and acidic residues. Positions D2814 to S2825 are enriched in low complexity. Phosphoserine occurs at positions 2871 and 2873. The segment covering P2876 to Y2904 has biased composition (basic and acidic residues). A compositionally biased stretch (low complexity) spans S2960–L2969. The segment covering P2983 to L2992 has biased composition (basic and acidic residues).

It belongs to the G-protein coupled receptor 2 family. LN-TM7 subfamily. The iron and 2-oxoglutarate dependent 3-hydroxylation of aspartate and asparagine is (R) stereospecific within EGF domains.

Its subcellular location is the cell membrane. Receptor that may have an important role in cell/cell signaling during nervous system formation. This Homo sapiens (Human) protein is Cadherin EGF LAG seven-pass G-type receptor 1 (CELSR1).